A 212-amino-acid chain; its full sequence is uncharacterized protein (212 aa).

2 disordered regions span residues 1 to 25 (MARKRKSRNNSKIGHGAISRIGRPN) and 165 to 212 (STSG…HWGG). The span at 202 to 212 (RSSSARGHWGG) shows a compositional bias: low complexity.

This is an uncharacterized protein from Escherichia coli (strain K12).